The chain runs to 259 residues: NAD kinase (259 aa).

The Proton acceptor role is filled by Asp49. NAD(+) is bound by residues 49 to 50, Arg54, 118 to 119, Asp148, Ala156, 159 to 164, and Ala183; these read DG, NE, and TAYNYS.

The protein belongs to the NAD kinase family. A divalent metal cation serves as cofactor.

It is found in the cytoplasm. It catalyses the reaction NAD(+) + ATP = ADP + NADP(+) + H(+). Its function is as follows. Involved in the regulation of the intracellular balance of NAD and NADP, and is a key enzyme in the biosynthesis of NADP. Catalyzes specifically the phosphorylation on 2'-hydroxyl of the adenosine moiety of NAD to yield NADP. The protein is NAD kinase of Xylella fastidiosa (strain Temecula1 / ATCC 700964).